The sequence spans 332 residues: Phosphate acyltransferase (332 aa).

The protein belongs to the PlsX family. Homodimer. Probably interacts with PlsY.

The protein resides in the cytoplasm. It carries out the reaction a fatty acyl-[ACP] + phosphate = an acyl phosphate + holo-[ACP]. It participates in lipid metabolism; phospholipid metabolism. Catalyzes the reversible formation of acyl-phosphate (acyl-PO(4)) from acyl-[acyl-carrier-protein] (acyl-ACP). This enzyme utilizes acyl-ACP as fatty acyl donor, but not acyl-CoA. The chain is Phosphate acyltransferase from Oceanobacillus iheyensis (strain DSM 14371 / CIP 107618 / JCM 11309 / KCTC 3954 / HTE831).